The following is a 67-amino-acid chain: MPQLDTSTWFITILATILTLFIIMQLKISTYYYHSNPEPKTTKMTKSLIPWEIKWTKIYSPLSLPLR.

A helical membrane pass occupies residues 8–24 (TWFITILATILTLFIIM). Lysine 54 is subject to N6-acetyllysine; alternate. Lysine 54 bears the N6-succinyllysine; alternate mark. The residue at position 57 (lysine 57) is an N6-acetyllysine.

Belongs to the ATPase protein 8 family. As to quaternary structure, F-type ATPases have 2 components, CF(1) - the catalytic core - and CF(0) - the membrane proton channel. Component of an ATP synthase complex composed of ATP5PB, ATP5MC1, ATP5F1E, ATP5PD, ATP5ME, ATP5PF, ATP5MF, MT-ATP6, MT-ATP8, ATP5F1A, ATP5F1B, ATP5F1D, ATP5F1C, ATP5PO, ATP5MG, ATP5MK and ATP5MJ. Interacts with PRICKLE3.

The protein resides in the mitochondrion membrane. Its function is as follows. Mitochondrial membrane ATP synthase (F(1)F(0) ATP synthase or Complex V) produces ATP from ADP in the presence of a proton gradient across the membrane which is generated by electron transport complexes of the respiratory chain. F-type ATPases consist of two structural domains, F(1) - containing the extramembraneous catalytic core and F(0) - containing the membrane proton channel, linked together by a central stalk and a peripheral stalk. During catalysis, ATP synthesis in the catalytic domain of F(1) is coupled via a rotary mechanism of the central stalk subunits to proton translocation. Part of the complex F(0) domain. Minor subunit located with subunit a in the membrane. This Artibeus jamaicensis (Jamaican fruit-eating bat) protein is ATP synthase protein 8 (MT-ATP8).